Reading from the N-terminus, the 272-residue chain is DNA repair protein RecO (272 aa).

Belongs to the RecO family.

Its function is as follows. Involved in DNA repair and RecF pathway recombination. The protein is DNA repair protein RecO of Limosilactobacillus fermentum (strain NBRC 3956 / LMG 18251) (Lactobacillus fermentum).